Consider the following 157-residue polypeptide: Snaclec EMS16 subunit alpha (157 aa).

The signal sequence occupies residues 1-23 (MGRFISVSFGLLVVFLSLSGTGA). Intrachain disulfides connect C27-C38, C55-C152, and C127-C144. Residues 34-153 (YDQHCYLAIG…CEDLYPFVCK (120 aa)) form the C-type lectin domain.

This sequence belongs to the snaclec family. In terms of assembly, heterodimer of subunits A and B; disulfide-linked. In terms of tissue distribution, expressed by the venom gland.

It localises to the secreted. Functionally, EMS16 is a potent and selective inhibitor of alpha-2/beta-1 (ITGA2/ITGB1) integrin and acts as a potent antagonist of platelet aggregation and cell migration. Binds specifically to the I domain of the alpha-2 subunit, in a metal ion-independent fashion. The polypeptide is Snaclec EMS16 subunit alpha (Echis multisquamatus (Central Asian sand viper)).